The sequence spans 206 residues: FMN-dependent NADH:quinone oxidoreductase (206 aa).

Residues 15–17 (SVS), 94–97 (MYNF), and 138–141 (TRGG) each bind FMN.

Belongs to the azoreductase type 1 family. In terms of assembly, homodimer. FMN serves as cofactor.

The enzyme catalyses 2 a quinone + NADH + H(+) = 2 a 1,4-benzosemiquinone + NAD(+). It carries out the reaction N,N-dimethyl-1,4-phenylenediamine + anthranilate + 2 NAD(+) = 2-(4-dimethylaminophenyl)diazenylbenzoate + 2 NADH + 2 H(+). Functionally, quinone reductase that provides resistance to thiol-specific stress caused by electrophilic quinones. Also exhibits azoreductase activity. Catalyzes the reductive cleavage of the azo bond in aromatic azo compounds to the corresponding amines. The protein is FMN-dependent NADH:quinone oxidoreductase of Sinorhizobium medicae (strain WSM419) (Ensifer medicae).